A 286-amino-acid chain; its full sequence is Light-independent protochlorophyllide reductase iron-sulfur ATP-binding protein (286 aa).

ATP-binding positions include 10 to 15 (GIGKST) and Lys-39. Ser-14 serves as a coordination point for Mg(2+). Positions 95 and 129 each coordinate [4Fe-4S] cluster. 180 to 181 (NR) is an ATP binding site.

The protein belongs to the NifH/BchL/ChlL family. Homodimer. Protochlorophyllide reductase is composed of three subunits; ChlL, ChlN and ChlB. [4Fe-4S] cluster is required as a cofactor.

The catalysed reaction is chlorophyllide a + oxidized 2[4Fe-4S]-[ferredoxin] + 2 ADP + 2 phosphate = protochlorophyllide a + reduced 2[4Fe-4S]-[ferredoxin] + 2 ATP + 2 H2O. The protein operates within porphyrin-containing compound metabolism; chlorophyll biosynthesis (light-independent). In terms of biological role, component of the dark-operative protochlorophyllide reductase (DPOR) that uses Mg-ATP and reduced ferredoxin to reduce ring D of protochlorophyllide (Pchlide) to form chlorophyllide a (Chlide). This reaction is light-independent. The L component serves as a unique electron donor to the NB-component of the complex, and binds Mg-ATP. The polypeptide is Light-independent protochlorophyllide reductase iron-sulfur ATP-binding protein (Synechococcus elongatus (strain ATCC 33912 / PCC 7942 / FACHB-805) (Anacystis nidulans R2)).